We begin with the raw amino-acid sequence, 523 residues long: Probable lipid II flippase MurJ (523 aa).

The next 12 membrane-spanning stretches (helical) occupy residues 98–118, 146–166, 170–190, 201–221, 246–266, 284–304, 328–348, 360–380, 395–415, 422–442, 461–481, and 489–509; these read AFYS…IVYV, IMFG…ILNA, FGLP…FTFM, GLAW…AVAL, MLPG…NLYF, LLEL…LPTL, LFLA…IIEV, VQMT…VSCS, VPMV…PVLM, GLMI…MGLL, FVLA…LMAQ, and LALF…AYVL.

This sequence belongs to the MurJ/MviN family.

The protein resides in the cell inner membrane. It functions in the pathway cell wall biogenesis; peptidoglycan biosynthesis. Functionally, involved in peptidoglycan biosynthesis. Transports lipid-linked peptidoglycan precursors from the inner to the outer leaflet of the cytoplasmic membrane. The polypeptide is Probable lipid II flippase MurJ (Bdellovibrio bacteriovorus (strain ATCC 15356 / DSM 50701 / NCIMB 9529 / HD100)).